A 64-amino-acid chain; its full sequence is DNA gyrase inhibitor YacG (64 aa).

Cys-7, Cys-10, Cys-26, and Cys-30 together coordinate Zn(2+). The interval 43–64 (KRIPGPINPDLLPYPDEGEQWQ) is disordered.

The protein belongs to the DNA gyrase inhibitor YacG family. Interacts with GyrB. Zn(2+) is required as a cofactor.

In terms of biological role, inhibits all the catalytic activities of DNA gyrase by preventing its interaction with DNA. Acts by binding directly to the C-terminal domain of GyrB, which probably disrupts DNA binding by the gyrase. This chain is DNA gyrase inhibitor YacG, found in Aeromonas salmonicida (strain A449).